Consider the following 195-residue polypeptide: MEAFTIHTGRAVPLRRSDVDTDQIIPSEWLKRIERTGFGAGLFSEWRADEGFVLNNPAYAEASILIAGPDFGTGSSREHAVWALQDYGFRAVISPRFADIFRGNALGNGLLPVQLPAETVETLQTAAEQDPSVEITVDLAAREVRGAGLVAPFELDDFTRWRLMEGLDDVGLTLRHEELITGFEATRPAWLPSAV.

The protein belongs to the LeuD family. LeuD type 1 subfamily. In terms of assembly, heterodimer of LeuC and LeuD.

It catalyses the reaction (2R,3S)-3-isopropylmalate = (2S)-2-isopropylmalate. It functions in the pathway amino-acid biosynthesis; L-leucine biosynthesis; L-leucine from 3-methyl-2-oxobutanoate: step 2/4. Its function is as follows. Catalyzes the isomerization between 2-isopropylmalate and 3-isopropylmalate, via the formation of 2-isopropylmaleate. The sequence is that of 3-isopropylmalate dehydratase small subunit from Frankia alni (strain DSM 45986 / CECT 9034 / ACN14a).